The primary structure comprises 213 residues: Histone H1.2 (213 aa).

The span at 1-17 (MSETAPAAPAAAPPAEK) shows a compositional bias: low complexity. Residues 1-41 (MSETAPAAPAAAPPAEKTPVKKKAAKKPAGARRKASGPPVS) form a disordered region. Ser2 carries the N-acetylserine; partial modification. The residue at position 2 (Ser2) is a Phosphoserine. At Lys17 the chain carries N6-acetyllysine. Basic residues predominate over residues 20–35 (VKKKAAKKPAGARRKA). N6-(2-hydroxyisobutyryl)lysine occurs at positions 23, 26, and 27. Residue Lys34 is modified to N6-(beta-hydroxybutyryl)lysine; alternate. Lys34 carries the N6-crotonyllysine; alternate modification. N6-methyllysine; alternate is present on Lys34. Residues 36-109 (SGPPVSELIT…GASGSFKLNK (74 aa)) enclose the H15 domain. Lys46 carries the post-translational modification N6-(2-hydroxyisobutyryl)lysine. Lys52 carries the N6-(beta-hydroxybutyryl)lysine; alternate modification. At Lys52 the chain carries N6-(2-hydroxyisobutyryl)lysine; alternate. Residue Arg54 is modified to Citrulline. Residue Lys63 is modified to N6-(2-hydroxyisobutyryl)lysine. The residue at position 64 (Lys64) is an N6-(beta-hydroxybutyryl)lysine; alternate. Lys64 carries the post-translational modification N6-crotonyllysine; alternate. The residue at position 64 (Lys64) is an N6-(2-hydroxyisobutyryl)lysine; alternate. 2 positions are modified to N6-(2-hydroxyisobutyryl)lysine: Lys75 and Lys81. An N6-(beta-hydroxybutyryl)lysine; alternate mark is found at Lys85 and Lys90. N6-crotonyllysine; alternate occurs at positions 85, 90, and 97. Residues Lys85, Lys90, and Lys97 each carry the N6-(2-hydroxyisobutyryl)lysine; alternate modification. The interval 95-213 (QTKGTGASGS…KPKKAAPKKK (119 aa)) is disordered. Lys97 bears the N6-succinyllysine; alternate mark. Phosphoserine; by PKC is present on Ser104. Lys106 is modified (N6-(beta-hydroxybutyryl)lysine). Residues Lys110, Lys117, Lys121, Lys129, and Lys136 each carry the N6-(2-hydroxyisobutyryl)lysine modification. The span at 119-140 (KAKKAGAAKPKKAAGAAKKTKK) shows a compositional bias: basic residues. Thr146 is modified (phosphothreonine). Position 148 is an N6-(2-hydroxyisobutyryl)lysine (Lys148). Residues 149-160 (KTAKKTPKKAKK) are compositionally biased toward basic residues. Residues Lys159 and Lys168 each carry the N6-crotonyllysine; alternate modification. N6-(2-hydroxyisobutyryl)lysine; alternate is present on residues Lys159 and Lys168. Residues 169–186 (KVAKSPKKAKAAKPKKAA) are compositionally biased toward basic residues. N6-methyllysine; by EHMT1 and EHMT2 is present on Lys187. Ser188 bears the ADP-ribosylserine mark. Residues 193 to 213 (VKPKAAKPKVAKPKKAAPKKK) are compositionally biased toward basic residues.

The protein belongs to the histone H1/H5 family. In terms of processing, H1 histones are progressively phosphorylated during the cell cycle, becoming maximally phosphorylated during late G2 phase and M phase, and being dephosphorylated sharply thereafter. Crotonylation (Kcr) is specifically present in male germ cells and marks testis-specific genes in post-meiotic cells, including X-linked genes that escape sex chromosome inactivation in haploid cells. Crotonylation marks active promoters and enhancers and confers resistance to transcriptional repressors. It is also associated with post-meiotically activated genes on autosomes. Post-translationally, ADP-ribosylated on Ser-188 in response to DNA damage. In terms of processing, citrullination at Arg-54 (H1R54ci) by PADI4 takes place within the DNA-binding site of H1 and results in its displacement from chromatin and global chromatin decondensation, thereby promoting pluripotency and stem cell maintenance.

Its subcellular location is the nucleus. The protein resides in the chromosome. Histone H1 protein binds to linker DNA between nucleosomes forming the macromolecular structure known as the chromatin fiber. Histones H1 are necessary for the condensation of nucleosome chains into higher-order structured fibers. Also acts as a regulator of individual gene transcription through chromatin remodeling, nucleosome spacing and DNA methylation. The polypeptide is Histone H1.2 (Bos taurus (Bovine)).